Reading from the N-terminus, the 594-residue chain is Probable Xaa-Pro aminopeptidase P (594 aa).

Residues D391, D402, E500, and E514 each coordinate Mn(2+).

Belongs to the peptidase M24B family. The cofactor is Mn(2+).

It catalyses the reaction Release of any N-terminal amino acid, including proline, that is linked to proline, even from a dipeptide or tripeptide.. In terms of biological role, catalyzes the removal of a penultimate prolyl residue from the N-termini of peptides. The chain is Probable Xaa-Pro aminopeptidase P (ampp) from Pyrenophora tritici-repentis (strain Pt-1C-BFP) (Wheat tan spot fungus).